Consider the following 2109-residue polypeptide: MAPVALRDLAESPELEGTEVVSMKARSSPPLTPPSPPCLVTDYIRHQVESNPDAPAVQCEQEQPYSYAALWQLVEHIAAAGQFRAGRIMPLCMDPSVEFVATVLAILRAGSAYVILDPEGSAQRNRVIAEDCGCEPVIVHEKYAAFFDHSVTIESIQSIQNHGQLDPPSITPSDLAYLIYTSGSTGTPKGVLLSHRAVSHGIDQFQLNGRKRWLLFYNPIFSAAQRTILATLSKGACLCLTRRDRLATALPEVLNNLQIDALGITPSALALLSPGETPACLQQITTVGEPLSQSLVNKWADRVHLRVSYGLSECAQLNFSRQLQPGDNPRNPGLPSDTTTAIVLEPGTMTRLSVNEPGELCLYGPQVANGYHQRQKETQAAFVKAPKDTHGTMMFRTGDLAVQREDGTFEILGRIDHQVKIHGQRVEPEEVAAKLATVKGVASLACVGCYINERMSLVAAIVPSPEADWGTLVQYLRDHARQSFPPYMVPSYWMSCTEFPTNQNGKVDFRAIRRLAESTEVSKMLGHSTSPKDGATAGLSETASKIAQVWAAVLNLPASSIIPSDSLVALGGTSIDAIRAIRELKGHGIHVELADMLQAHTIEEIADTVQLDSSPTHVSNEPAAPFDYISDAVLKADLLADRRVVDAYPVTALQEGILASTLQGSQDYLYQRVFDVRHLDLVRLQLAFQVVFWRTELLKSTFVAAAKGFLQVVRNDFNLPWSEVSLSLSEYLEQDKNNGVTLGEPFMRVAVLDRSILVVSVHHALFDFWSHRFLFDDVARVYYGRRPEKRPEWKSFVGLLHTRDTKASQDFWREHLGEAVPTVLNYAPVTKTSTARRTVSQEVRAASSALRAPLGAIIHAAWALVLSSHIASKSVTMATAVSGRELPVPGIEALNGPTLAVVPYAIAIDSEQTLQQLVQSVNTSLWKVIKHSQVGVRNALAAAERQGTTLFDTMVNILVNGKVNDDISKEVFQLYGRRPVWRTEYTTLNVEEGATGIDVTLTSPMEEHRLEFILEQFCMALNLIASNPRQTVKATNLVSETELQFMLQSHKNLPDATRTLNGQFEATVRTYPNRTAINYQNEQFLTYAELDSEANRMTHYLSELGVVPGDIVPLLLEKSPLMIKAILALFKLGAAYVPLSPENPLERNAYIARDVSAKFVLTEKEHEAYFASESDIPSVLLDQANLSQYGPEPQLVTVSPDALAYLLYTSGSTGLPKGVMVTHGACAAAMQSIIEFEHRQGQESRMLQFSNYVFDVSLYDFFVALHSGGTLCIAPSERLLNNLAEVINEMNVNHVFLTPTVARLLNPKDVPNLESMTVGGEQLTRDVVTTWASRVTLRNGYGPTEASVLVTMKDVDTDTTGGNIGRPLASVGAIVLEADGVRPVPYGAVGELCFFGPQLAQGYFKKPDITSAAFIESEVLNGRRLYRSGDLARYLPNGDIECLGRKDDQVKINGHRIELGEIEQAFLRTGEIKDCVLTVWKHNSTAHLVAVAVFDGASSEKPGEVLPLDGFAENVQRVRSKLTGLTPYMIPKAIVPLSSLPRLPSGKANRKQLKAMVQSLSQGELTKFSFDKVGAAQSKGAVIPLASETQKVLQQGWIETLQLADDDFGLEADFLSLGGDSIAAINLVSWLRRKQLKISVRDVLKYTSLGAMADQLKGESGDAHQIQKKTFTPPSEIDAAISAAGLQATEYEYIYPCPPGQAEFLTQGAHPEALWSLMTVRKVGSDFAPRQWIDLVRQLTTTNEILRTTFTRCHGNWYGVVLRDATPVVEIYEDVSNEQRQQIIKSLDDYRFVFGKPFIRYAILHLSTGETEIVTKLDHGLYDGTLLRIFGEHFQAYQDNVPVDRFTSFKDFAFHIWQMDKSRTLSFWKQSEKRPIAFEFPSSSGTEPRINSVHVHTINLEFDAFAKSTGATVSIIFQSIFQLWLALRSNQRDVAFDYLYTGRNIDLPDPQTINGTCANFLPMRSKVDPSMPVSEFLRQTQDEFWQYTENSTVGMDEIHEACETTREGFSNKTLFLFQPFEPAPATAKQYEKWIVMAKSQVTMPQPYAVVFEVVKTADVNEYKLKFAFDKRVYEKEQVQGEAQVIEKLLAKVMENAEASVGDVLGSFRS.

The interval 31–512 (LTPPSPPCLV…QNGKVDFRAI (482 aa)) is adenylation 1. The region spanning 537–613 (AGLSETASKI…EIADTVQLDS (77 aa)) is the Carrier 1 domain. Ser574 is subject to O-(pantetheine 4'-phosphoryl)serine. Residues 646-908 (DAYPVTALQE…LAVVPYAIAI (263 aa)) form a condensation 1 region. The interval 1058-1555 (RTLNGQFEAT…GKANRKQLKA (498 aa)) is adenylation 2. The Carrier 2 domain occupies 1584-1660 (PLASETQKVL…AMADQLKGES (77 aa)). Ser1621 carries the O-(pantetheine 4'-phosphoryl)serine modification. The tract at residues 1695-1968 (YPCPPGQAEF…NFLPMRSKVD (274 aa)) is condensation 2.

Belongs to the NRP synthetase family.

The protein operates within siderophore biosynthesis. In terms of biological role, nonribosomal peptide synthetase; part of the siderophore biosynthetic pathway. Aspergillus fumigatus produces four types of siderophores, low-molecular-mass iron chelators, including excreted fusarinine C (FsC) and triacetylfusarinine C (TAFC) for iron uptake and intacellular ferricrocin (FC) for hyphal and hydroxyferricrocin (HFC) for conidial iron distribution and storage. TAFC consists of three N(2)-acetyl-N(5)-anhydromevalonyl-N(5)-hydroxyornithine residues cyclically linked by ester bonds; FC is a cyclic hexapeptide with the structure Gly-Ser-Gly-(N(5)-acetyl-N(5)-hydroxyornithine)x3. The biosynthesis of all four siderophores depends on the hydroxylation of ornithine, catalyzed by the monooxygenase sidA. Subsequently, the pathways for biosynthesis of extra- and intracellular siderophores split. For biosynthesis of extracellular siderophores, the transacylase sidF transfers anhydromevalonyl to N(5)-hydroxyornithine. The required anhydromevalonyl-CoA moiety is derived from mevalonate by CoA ligation and dehydration catalyzed by sidI and sidH respectively. The acetylation of N(5)-hydroxyornithine for FC biosynthesis involves the constitutively expressed sidL. FC is hydroxylated to HFC by an as yet uncharacterized enzyme during conidiation. Assembly of fusarinine C (FsC) and FC is catalyzed by two different nonribosomal peptide synthetases (NRPS), sidD and sidC respectively. Subsequently, sidG catalyzes N2-acetylation of FsC for forming TAFC. Both extra- and intracellular siderophores are crucial for growth during iron limitation and virulence. The sequence is that of Nonribosomal peptide synthetase sidE from Aspergillus fumigatus (strain ATCC MYA-4609 / CBS 101355 / FGSC A1100 / Af293) (Neosartorya fumigata).